Reading from the N-terminus, the 497-residue chain is Lysine--tRNA ligase (497 aa).

Mg(2+)-binding residues include Glu-409 and Glu-416.

This sequence belongs to the class-II aminoacyl-tRNA synthetase family. Homodimer. Mg(2+) is required as a cofactor.

Its subcellular location is the cytoplasm. The enzyme catalyses tRNA(Lys) + L-lysine + ATP = L-lysyl-tRNA(Lys) + AMP + diphosphate. This is Lysine--tRNA ligase from Streptococcus pyogenes serotype M6 (strain ATCC BAA-946 / MGAS10394).